The following is a 165-amino-acid chain: Cysteine and tyrosine-rich protein 1 (165 aa).

Residues 1-29 (MDALRLPRRLGVLLWKVVLLFVYAEDCRA) form the signal peptide. Residues 30-61 (QCGKDCRAYCCNGSTPHCCSYYAYIGSILSGT) are Extracellular-facing. The helical transmembrane segment at 62–82 (AIAGIVFGIVFIMGVIAGIAI) threads the bilayer. The Cytoplasmic segment spans residues 83–165 (CICMCMKNNR…SSSQNRICNN (83 aa)). Residues 127 to 165 (DLPPPYSPAPQASAQRSPPPPYPGNSRKYSSSQNRICNN) form a disordered region. The segment covering 153 to 165 (RKYSSSQNRICNN) has biased composition (polar residues).

Belongs to the CYYR1 family.

The protein resides in the membrane. This is Cysteine and tyrosine-rich protein 1 (Cyyr1) from Rattus norvegicus (Rat).